Consider the following 317-residue polypeptide: Adenine deaminase (317 aa).

Zn(2+) contacts are provided by H14, H16, and H194. Residue E197 is the Proton donor of the active site. D275 contributes to the Zn(2+) binding site. Substrate is bound at residue D276.

The protein belongs to the metallo-dependent hydrolases superfamily. Adenosine and AMP deaminases family. Adenine deaminase type 2 subfamily. Requires Zn(2+) as cofactor.

It carries out the reaction adenine + H2O + H(+) = hypoxanthine + NH4(+). Its function is as follows. Catalyzes the hydrolytic deamination of adenine to hypoxanthine. Plays an important role in the purine salvage pathway and in nitrogen catabolism. The polypeptide is Adenine deaminase (Pseudomonas syringae pv. tomato (strain ATCC BAA-871 / DC3000)).